A 186-amino-acid polypeptide reads, in one-letter code: Ribosome-recycling factor (186 aa).

This sequence belongs to the RRF family.

It is found in the cytoplasm. Functionally, responsible for the release of ribosomes from messenger RNA at the termination of protein biosynthesis. May increase the efficiency of translation by recycling ribosomes from one round of translation to another. This is Ribosome-recycling factor from Chlorobium chlorochromatii (strain CaD3).